The sequence spans 523 residues: Protein disulfide-isomerase (523 aa).

The first 22 residues, Met1–Ala22, serve as a signal peptide directing secretion. Positions Asp24–Pro137 constitute a Thioredoxin 1 domain. Catalysis depends on nucleophile residues Cys59 and Cys62. Cys59 and Cys62 form a disulfide bridge. N-linked (GlcNAc...) asparagine glycosylation occurs at Asn170. The Thioredoxin 2 domain occupies Val344 to Lys475. A disulfide bridge connects residues Cys394 and Cys397. 2 stretches are compositionally biased toward basic and acidic residues: residues Val478 to Ala502 and Ser512 to Leu523. The disordered stretch occupies residues Val478 to Leu523. Positions His520–Leu523 match the Prevents secretion from ER motif.

The protein belongs to the protein disulfide isomerase family.

It is found in the endoplasmic reticulum lumen. The catalysed reaction is Catalyzes the rearrangement of -S-S- bonds in proteins.. Functionally, participates in the folding of proteins containing disulfide bonds, may be involved in glycosylation, prolyl hydroxylation and triglyceride transfer. The sequence is that of Protein disulfide-isomerase from Arthroderma benhamiae (strain ATCC MYA-4681 / CBS 112371) (Trichophyton mentagrophytes).